We begin with the raw amino-acid sequence, 879 residues long: Metabotropic glutamate receptor 3 (879 aa).

Residues 1–22 (MKMLTRLQILMLALFSKGFLLS) form the signal peptide. The Extracellular portion of the chain corresponds to 23 to 576 (LGDHNFMRRE…EDYIKWEDAW (554 aa)). Residues Cys57 and Cys99 are joined by a disulfide bond. L-glutamate-binding positions include Arg68, Ser151, and 172–174 (AST). Residue Asn209 is glycosylated (N-linked (GlcNAc...) asparagine). Residue Tyr222 coordinates L-glutamate. Intrachain disulfides connect Cys240-Cys527, Cys361-Cys373, Cys412-Cys419, Cys509-Cys528, Cys513-Cys531, Cys534-Cys546, and Cys549-Cys562. The N-linked (GlcNAc...) asparagine glycan is linked to Asn292. L-glutamate is bound at residue Asp301. Lys389 lines the L-glutamate pocket. N-linked (GlcNAc...) asparagine glycans are attached at residues Asn414 and Asn439. The chain crosses the membrane as a helical span at residues 577 to 599 (AIGPVTIACLGFLCTCIVITVFI). Topologically, residues 600-613 (KHNNTPLVKASGRE) are cytoplasmic. The helical transmembrane segment at 614-634 (LCYILLFGVSLSYCMTFFFIA) threads the bilayer. The Extracellular segment spans residues 635 to 645 (KPSPVICALRR). Residues 646–664 (LGLGTSFAICYSALLTKTN) traverse the membrane as a helical segment. Topologically, residues 665 to 688 (CIARIFDGVKNGAQRPKFISPSSQ) are cytoplasmic. The chain crosses the membrane as a helical span at residues 689–709 (VFICLGLILVQIVMVSVWLIL). Residues 710-734 (ETPGTRRYTLPEKRETVILKCNVKD) are Extracellular-facing. A helical transmembrane segment spans residues 735–756 (SSMLISLTYDVVLVILCTVYAF). Residues 757-769 (KTRKCPENFNEAK) lie on the Cytoplasmic side of the membrane. Residues 770-792 (FIGFTMYTTCIIWLAFLPIFYVT) form a helical membrane-spanning segment. Over 793–802 (SSDYRVQTTT) the chain is Extracellular. Residues 803-828 (MCISVSLSGFVVLGCLFAPKVHIVLF) form a helical membrane-spanning segment. Residues 829-879 (QPQKNVVTHRLHLNRFSVSGTATTYSQSSASTYVPTVCNGREVLDSTTSSL) are Cytoplasmic-facing.

It belongs to the G-protein coupled receptor 3 family. As to quaternary structure, interacts with TAMALIN. Is widely distributed in the CNS. Predominant expression is seen in the neuronal cells of the cerebral cortex, dentate gyrus, and glial cells throughout brain regions.

The protein localises to the cell membrane. Its function is as follows. G-protein coupled receptor for glutamate. Ligand binding causes a conformation change that triggers signaling via guanine nucleotide-binding proteins (G proteins) and modulates the activity of down-stream effectors. Signaling inhibits adenylate cyclase activity. This Rattus norvegicus (Rat) protein is Metabotropic glutamate receptor 3 (Grm3).